The following is a 90-amino-acid chain: UPF0367 protein SYNPCC7002_A0153 (90 aa).

The protein belongs to the UPF0367 family.

The polypeptide is UPF0367 protein SYNPCC7002_A0153 (Picosynechococcus sp. (strain ATCC 27264 / PCC 7002 / PR-6) (Agmenellum quadruplicatum)).